The primary structure comprises 427 residues: Dihydroorotase (427 aa).

Zn(2+) contacts are provided by H60 and H62. Substrate is bound by residues 62 to 64 (HFR) and N94. Zn(2+) is bound by residues D152, H179, and H232. N278 serves as a coordination point for substrate. Residue D305 participates in Zn(2+) binding. Residue D305 is part of the active site. Substrate is bound by residues H309 and 323–324 (FG).

The protein belongs to the metallo-dependent hydrolases superfamily. DHOase family. Class I DHOase subfamily. Zn(2+) serves as cofactor.

The catalysed reaction is (S)-dihydroorotate + H2O = N-carbamoyl-L-aspartate + H(+). It participates in pyrimidine metabolism; UMP biosynthesis via de novo pathway; (S)-dihydroorotate from bicarbonate: step 3/3. Its function is as follows. Catalyzes the reversible cyclization of carbamoyl aspartate to dihydroorotate. This Enterococcus faecalis (strain ATCC 700802 / V583) protein is Dihydroorotase.